The primary structure comprises 321 residues: Glucokinase (321 aa).

Residue 8–13 (GDVGGT) coordinates ATP.

Belongs to the bacterial glucokinase family.

The protein resides in the cytoplasm. It catalyses the reaction D-glucose + ATP = D-glucose 6-phosphate + ADP + H(+). The sequence is that of Glucokinase from Shigella sonnei (strain Ss046).